Here is a 681-residue protein sequence, read N- to C-terminus: MFAVFWTNLRCLGYNTFTCGVETPTTWGKVGSLDASSSTFTTYRGYPLAMAISAGTPACDSPDDNIRRAINTLRADLSALLRGESVAYSAFLSACTKFDGFAQSCHGMLSDDTLDLLYSFSESLLALSENMALLETKKEAESNKFTAEVMAILSDKTSGLDLSDDKNEPTSPTPAYVEPCARWLKDNWYNPYPSGEVRTQIARQTRTSRKDIDAWFIDARRRIGWNEVRRKHFENKRVDIVRAASIFTGPQSIPAEVDALPDHIELEFAGILSRARSLYEEKFSPSKLAVKLDTAVKDMTPSLKEQLKNDEARRKREASTVGIINQRARHAYPTPERSPASAAELLASPPSFAIDSDKLPSVGRKRRRSLESDETVSSPLCKRPRSQSVFCELSPVKGLPSPSPSTQDELLETSAAPSPQPSLLPKLTPTDSARSTGKRKRRLSDGFQYPAAKRPEIRPQVVSDPFPATSSEHWEQWFREHVLSSPELTLTGDIPPAVTTDAPDSNTPLDIQLFNFPLIPDLPPSVPVVPAPTAELNIIEPLEVPAVTQVNVDPEATALDHTFSWMASDFPPPLQSTNTFPSSSPFSALDGMSLPFPDTRSSAFLPDPSLWSNISDPDLDFSTVFSQPSTNSAMTSSIQVPLQPTWLTSRSLSEQEREAKRKELEELEARAQAIRAEISAP.

A DNA-binding region (homeobox; TALE-type) is located at residues 165-227; the sequence is DKNEPTSPTP…DARRRIGWNE (63 aa). Residues 307 to 318 show a composition bias toward basic and acidic residues; sequence LKNDEARRKREA. Disordered regions lie at residues 307–341, 353–381, and 394–466; these read LKNDEARRKREASTVGIINQRARHAYPTPERSPAS, AIDSDKLPSVGRKRRRSLESDETVSSPLC, and SPVK…SDPF. A compositionally biased stretch (low complexity) spans 413–430; it reads TSAAPSPQPSLLPKLTPT.

This sequence belongs to the TALE/M-ATYP homeobox family. In terms of assembly, may dimerize.

It is found in the nucleus. Functionally, has a major regulatory role in sexual and asexual development. It may bind DNA itself or it may have a role in preventing DNA-binding of another protein. This Coprinopsis cinerea (Inky cap fungus) protein is Mating-type protein beta1-1.